Reading from the N-terminus, the 421-residue chain is Testin (421 aa).

Positions 92–199 constitute a PET domain; it reads MILTNPVAAR…GDVKLPCELD (108 aa). Residues 134–164 are disordered; that stretch reads KQPVAGSEGAQYRKKQLAKQLPAHDQDPSKC. Over residues 155–164 the composition is skewed to basic and acidic residues; that stretch reads PAHDQDPSKC. LIM zinc-binding domains follow at residues 234–297, 299–359, and 362–421; these read YSCY…CDSE, PRCA…NHAV, and QGCH…KMMS.

It belongs to the prickle / espinas / testin family. As to quaternary structure, interacts via LIM domain 1 with ZYX. Interacts (via LIM domain 3) with ENAH and VASP. Interacts with ALKBH4, talin, actin, alpha-actinin, GRIP1 and PXN. Interacts (via LIM domain 2) with ACTL7A (via N-terminus). Heterodimer with ACTL7A; the heterodimer interacts with ENAH to form a heterotrimer.

It is found in the cytoplasm. The protein localises to the cell junction. Its subcellular location is the focal adhesion. Scaffold protein that may play a role in cell adhesion, cell spreading and in the reorganization of the actin cytoskeleton. Plays a role in the regulation of cell proliferation. May act as a tumor suppressor. This Eulemur macaco macaco (Black lemur) protein is Testin (TES).